The following is a 2924-amino-acid chain: MNNLKNIDLIEKGVAIVGIGFRIPSGNNENSICSPDDLFNNLKNGFDGVSSTSERWSDNYHKLGEISSPNAGLLPLNEWKSFDPLFFGINPSEASLIDPQQRLLLKCTWEALEDASIDPISIRGTNTSVFIGASNIDYQHTNKHQDSVLKNAIAQSTCAISNRISYCFDFNGPSLSIDTACSSSLNAVSQGYHSILNGTSDISIVGGVNLILDVEMTKAYSYLSMLSKTHGKCKAFDESGDGFTRGECVGVVVLKNLQDAIKDGNRIYCVINGSSSNVDGNGNMDKVNFYSPSKQSQFNNINSAFKSTNDKLSINDIQYIEAHGTGTKTGDPIETEAISMAFKNRDKSAPILIGSIKSNIGHCEAGSGVASLIKCCLMFKYQCFLPNIHFKNPNPLIKFNEWNLKVVTSPIPFNKRNNEKPVSMMINNFGVTGSNCCLLISEFKNNNNFKENINLESQSVNDRVLIPFSANSSNSLNQYQSKFKNIINNQFNFIDFTAIQIYSKSNYLYQRSVVIASNSNELFENISNKKQIQTKNSIISNMSFKGKNPITIFVFSGQGSQYPKMALELYNNEVIFKKSIDLIDSKLSKYYGFSVWEKVKTIKDDDLTSIHDPIFAQPALCMISVSLFELYYHWGVNPSFILGHSLGEISASYCSGMIDLDTFCYTVYQRSIAQSKTNGCGRMLSINISDEEFKSMYSQKYPQIEIACYNSPQSIVVAGNESILNEISKELKEKEIFTAMLGSLSSFHTSSQQSTKDSILQLNIESNQPKVPIFSTVTTNLFNESNRFNSQYVYDNIIKPVKFTQTISNIYKHIESNQLDNDIVFIEIAPHPTLSFYIKQMVPSSLNESVSVYSALHKKKNDVEEFQQTISNLYCQNGYNINFKCQFNNKKSNLNIELPLYQWSDELYFAQNQVLEQHRKGGPPIDHLGLSNSYYSPFKNSYKTLIDINYKPFQYLKGHMVKGKYYFPGCGYIDNIIQLYKNQDIFISFIEFKTPLILIEGINQYLQTNIQQTGKSEYRAQFHFKDHKSNEWIQSSNSNFQLLDHGNDIPSNYNIKEIIKNKCNLSKLTKNELYKNIKSKTGLNYTGVFQGVTECYIGDNCTLSVVSLESQTNSFLNIPILDTCLHGMLILINDQCQIVFDKAIGFKYYSSNIPADFKENKDSFYVYSNLRPRVGGDSYHGTIIVMLSDGSVLYEIEEVVCKSLIPIKDSLKIEYPNDELYKVHLQSKDSPIPTPSSFKSIIYENDFFQSSLNIPEDLFKYISTLFYKDIIKRCPEININKINSHSVNEIISSFSKISKHERLFRFVFETIKENGILNSFEEKDDTYFEFNKVIIKSSRIISKLLFPLENDNDNEDLPQSLFQNGLMDKIYKCSYLRKKNQVISHVIKHSIKEIINNNIIIRILEFGGGTASLSVEVIEEIVTLLQENPNYQVEIEYTWSDISPAFIADAKNKINKIINDAAITNGLNVIYHPLTIGESLIETQSIKPSYYDFVIMSNVLHVVKDIKQAVEQMYQLLTTNGQLVFLEPPYKSVLNDSIVGSFEQWWSFTDTDIRKDRCGMPQQSWYQLLNSCNFKDIVMSKECIFFGSVIQAQKPPISLLNSQPKYDNIIIYGGSINSSFVENIKLDSNSKSLFQIETIQEFNKLISKSTITNDSIVYFIKTLETLSLDNFKQITLEYIEINQKLLQINSLCKHVLIVSDSRKTNYLASSAIGAARYFDEFPLLKLHTLDFDYDSTQNYINSKNNKMVQFINILTDSKTNVHKEMIIINNKVYYEIVQKEKNLKLKYNSESFENQNNLMCSLSPNLEYQLQSKQIKLRDNQVEVKTIATGINYKDYLNFSGSNSNGDDNTGLPQFGYEFSGIITRVGNNVKDYKVGDNVFGLSNSCTSSHIVTNFKKIQIKPSKISHIEASSIPIDYLTSFMSLFNVGSLNIEDNESILIHLGRDGFGLSTFEILKWKGFKSNLFVTVNSDKTKQYLLKKYGDLITGIYSNTDKSYVAEIKNKLIKLGSKKKGVDLILNTLPSDFMDSNFKLLTKYGRIIDLNSNHLNQSEFLKNINFKYNHGYHNFELSLFQKNKILKCLNEISNAIENGELKTIPIKEFTNLNIKDAIKYITNGNIEKITVSHDHEIYSDIIYRYLDEKEFSILKSNYQINSNNLGKNILITGQSGIILEILKWIIKYSNINTIENVIILSRSSLKWELELLINQTKLSNNNIKFHFKSVDVGDSEQVDNAINDILNENQQIRNIDSIFHFAFQQIACKVQEINMKHLNISHGAKSMGAINLHNQSIKRNWKLINFVMASSALSFIDSTDQCTYACANTLLDSFSKYRVSLGLPSTCINLGLIESTGFVSKNESISVFLDGNGIIPTPINRVLGLLDLQIQNASKFTNSMISNFKPSKFKNNQQISLFLKFDYLMNLKNNSEQTKKENTGNKNIDELFIEKVSELFSMDESKINKNLRLIDYGADSLIIVQLKNWIDKEIGINLITIQQLQNNTINISIKMILNSLMKNNQNKYLPSNRIDYWKNEMKFEESIKPIPNEIRSRNNNSGKIILLTGTTGFLGGFLLFNMLRLDSCKLIYCLIRNKSKSSYPLDEIINNLKYHQLYEKLNKSQISKIIPIIGDLSMNKLGLSNDDYETISKNVNLIINPGADINQKSSYQDCKLVNVNGVKEIIKLSLSSLKQRIPIVNFSSFSVFFNQSLDKNFDESVLPSIDNIDNLPTEYMKSKVVGEYILLEASKNYNIPSILIRPPSIFLNPETGIGHSSDLTLLMIQSCYELGYCPNQILNGFILINTITWLSNNITNIIMNDNCWTNSKMNIYNVHGKQIQSSLIIKPLEKHFNCKQINNNDWIDMVNNSNKKSCIKLKSFHSLENIFKSENKGYKSNESQSISLSTKSLLESMGSYNTDLKITDKMIISHIKHIFK.

The Ketosynthase family 3 (KS3) domain occupies 11-442 (EKGVAIVGIG…GSNCCLLISE (432 aa)). Residues cysteine 181, histidine 323, and histidine 362 each act as for beta-ketoacyl synthase activity in the active site. Positions 635–668 (GVNPSFILGHSLGEISASYCSGMIDLDTFCYTVY) are acyl/malonyl transferase. Serine 645 functions as the For acyl/malonyl transferase activity in the catalytic mechanism. Residues 925–1047 (IDHLGLSNSY…SNFQLLDHGN (123 aa)) are N-terminal hotdog fold. In terms of domain architecture, PKS/mFAS DH spans 925-1210 (IDHLGLSNSY…CKSLIPIKDS (286 aa)). Histidine 959 (proton acceptor; for dehydratase activity) is an active-site residue. Residues 1064 to 1210 (NLSKLTKNEL…CKSLIPIKDS (147 aa)) are C-terminal hotdog fold. The active-site Proton donor; for dehydratase activity is the aspartate 1122. The region spanning 2431–2508 (TGNKNIDELF…ISIKMILNSL (78 aa)) is the Carrier domain. Serine 2468 carries the O-(pantetheine 4'-phosphoryl)serine modification. The helical transmembrane segment at 2551–2571 (KIILLTGTTGFLGGFLLFNML) threads the bilayer.

Pantetheine 4'-phosphate is required as a cofactor.

The protein localises to the membrane. Probable polyketide synthase. The protein is Probable polyketide synthase 6 (pks6) of Dictyostelium discoideum (Social amoeba).